A 594-amino-acid polypeptide reads, in one-letter code: MAAPVDGSSGGWAARALRRALALTSLTTLALLASLTGLLLSGPAGALPTLGPGWQRQNPDPPVSRTRSLLLDAASGQLRLEDGFHPDAVAWANLTNAIRETGWAYLDLSTNGRYNDSLQAYAAGVVEASVSEELIYMHWMNTVVNYCGPFEYEVGYCEKLKNFLEANLEWMQREMELNPDSPYWHQVRLTLLQLKGLEDSYEGRLTFPTGRFTIKPLGFLLLQISGDLEDLEPALNKTNTKPSLGSGSCSALIKLLPGGHDLLVAHNTWNSYQNMLRIIKKYRLQFREGPQEEYPLVAGNNLVFSSYPGTIFSGDDFYILGSGLVTLETTIGNKNPALWKYVQPQGCVLEWIRNVVANRLALDGATWADVFKRFNSGTYNNQWMIVDYKAFLPNGPSPGSRVLTILEQIPGMVVVADKTAELYKTTYWASYNIPYFETVFNASGLQALVAQYGDWFSYTKNPRAKIFQRDQSLVEDMDAMVRLMRYNDFLHDPLSLCEACNPKPNAENAISARSDLNPANGSYPFQALHQRAHGGIDVKVTSFTLAKYMSMLAASGPTWDQCPPFQWSKSPFHSMLHMGQPDLWMFSPIRVPWD.

The signal sequence occupies residues 1-46 (MAAPVDGSSGGWAARALRRALALTSLTTLALLASLTGLLLSGPAGA). N-linked (GlcNAc...) asparagine glycosylation is found at N93 and N115. Residues C147 and C157 are joined by a disulfide bond. N-linked (GlcNAc...) asparagine glycosylation is found at N236 and N441. The cysteines at positions 497 and 500 are disulfide-linked. Residue N520 is glycosylated (N-linked (GlcNAc...) asparagine).

The protein belongs to the phospholipase B-like family. In terms of assembly, interacts with IGF2R. The p76 protein is synthesized as a 76 kDa precursor which is then processed into a N-terminal 28 kDa form and a C-terminal 40 kDa form. The C-terminal peptide is further processed into a 15 kDa form. Post-translationally, glycosylated; contains mannose 6-phosphate sugars. In terms of tissue distribution, present at highest levels in spleen, lung and brain (at protein level).

The protein localises to the lysosome lumen. Its function is as follows. Putative phospholipase. The polypeptide is Putative phospholipase B-like 2 (Plbd2) (Mus musculus (Mouse)).